We begin with the raw amino-acid sequence, 422 residues long: Metallocarboxypeptidase A (422 aa).

An N-terminal signal peptide occupies residues 1 to 17 (MRSVLSLALLAANVVTA). A propeptide spans 18-112 (AVVSPFDYSG…FEAYSAGYAP (95 aa)) (activation peptide). One can recognise a Peptidase M14 domain in the interval 119-419 (SYHSYQDHLS…AGTVAMLKAV (301 aa)). Residues histidine 179 and glutamate 182 each coordinate Zn(2+). Residues 179 to 182 (HARE), arginine 237, and 254 to 255 (NR) each bind substrate. Cysteine 248 and cysteine 271 are disulfide-bonded. Histidine 309 lines the Zn(2+) pocket. 310-311 (SY) provides a ligand contact to substrate. The active-site Proton donor/acceptor is glutamate 385.

It belongs to the peptidase M14 family. It depends on Zn(2+) as a cofactor.

Its subcellular location is the secreted. Functionally, extracellular metalloprotease that contributes to pathogenicity. The protein is Metallocarboxypeptidase A (MCPA) of Trichophyton rubrum (Athlete's foot fungus).